Reading from the N-terminus, the 587-residue chain is Xyloglucan-specific endo-beta-1,4-glucanase BoGH9A (587 aa).

The N-terminal stretch at 1–19 (MKIVRYIALFGILSGLAVA) is a signal peptide. C20 carries N-palmitoyl cysteine lipidation. C20 is lipidated: S-diacylglycerol cysteine. The active-site Nucleophile is the D185. Catalysis depends on residues H511 and D553. E562 acts as the Proton donor in catalysis.

Belongs to the glycosyl hydrolase 9 (cellulase E) family.

It is found in the cell outer membrane. The enzyme catalyses xyloglucan + H2O = xyloglucan oligosaccharides.. The protein operates within glucan metabolism; xyloglucan degradation. Functionally, catalyzes endohydrolysis of 1,4-beta-D-glucosidic linkages in xyloglucan with retention of the beta-configuration of the glycosyl residues in xyloglucan degradation. Cleaves the backbone of the 3 major types of natural xyloglucans (seed galactoxyloglucan from tamarind kernel, dicot fucogalactoxyloglucan from lettuce leaves, and solanaceous arabinogalactoxyloglucan from tomato fruit), to produce xyloglucan oligosaccharides. May be superfluous in xyloglucan degradation compared to BoGH5A (AC A7LXT7), the other Xyloglucan-specific endo-beta-1,4-glucanase. In Bacteroides ovatus (strain ATCC 8483 / DSM 1896 / JCM 5824 / BCRC 10623 / CCUG 4943 / NCTC 11153), this protein is Xyloglucan-specific endo-beta-1,4-glucanase BoGH9A.